The following is a 594-amino-acid chain: UvrABC system protein C (594 aa).

In terms of domain architecture, GIY-YIG spans 14–91; it reads DKPGCYLMKD…IKKHDPKYNV (78 aa). The region spanning 196–231 is the UVR domain; it reads SDIKEQLRERMEKAAEDLDFERAKELRDTIAQMEKV.

This sequence belongs to the UvrC family. Interacts with UvrB in an incision complex.

The protein localises to the cytoplasm. In terms of biological role, the UvrABC repair system catalyzes the recognition and processing of DNA lesions. UvrC both incises the 5' and 3' sides of the lesion. The N-terminal half is responsible for the 3' incision and the C-terminal half is responsible for the 5' incision. The protein is UvrABC system protein C of Shouchella clausii (strain KSM-K16) (Alkalihalobacillus clausii).